A 137-amino-acid chain; its full sequence is MSSLVRKIISTAKAPAAIGPYSQAVLVDRTIYISGQLGMDPASGQLVPGGVAEEAKQALTNIGEILKAAGCDFTNVVKATVLLADINDFSTVNDVYKQYFQSSFPARAAYQVAALPKGGRVEIEAIAVQGPLTTASL.

Serine 2 bears the N-acetylserine mark. N6-succinyllysine is present on residues lysine 13 and lysine 67. At threonine 74 the chain carries Phosphothreonine. Serine 136 carries the phosphoserine modification.

It belongs to the RutC family. In terms of assembly, homotrimer. Interacts with YTHDF2.

The protein localises to the cytoplasm. Its subcellular location is the nucleus. It localises to the peroxisome. The protein resides in the mitochondrion. It carries out the reaction 2-iminobutanoate + H2O = 2-oxobutanoate + NH4(+). The catalysed reaction is 2-iminopropanoate + H2O = pyruvate + NH4(+). Functionally, catalyzes the hydrolytic deamination of enamine/imine intermediates that form during the course of normal metabolism. May facilitate the release of ammonia from these potentially toxic reactive metabolites, reducing their impact on cellular components. It may act on enamine/imine intermediates formed by several types of pyridoxal-5'-phosphate-dependent dehydratases including L-threonine dehydratase. Its function is as follows. Also promotes endoribonucleolytic cleavage of some transcripts by promoting recruitment of the ribonuclease P/MRP complex. Acts by bridging YTHDF2 and the ribonuclease P/MRP complex. RIDA/HRSP12 binds to N6-methyladenosine (m6A)-containing mRNAs containing a 5'-GGUUC-3' motif: cooperative binding of RIDA/HRSP12 and YTHDF2 to such transcripts lead to recruitment of the ribonuclease P/MRP complex and subsequent endoribonucleolytic cleavage. The sequence is that of 2-iminobutanoate/2-iminopropanoate deaminase from Bos taurus (Bovine).